The primary structure comprises 499 residues: Cryptochrome-1 (499 aa).

Residues Arg190, Ser218, Ser220, Gln261, His328, 360–362, Cys366, and Asn369 contribute to the FAD site; that span reads DAD.

Belongs to the DNA photolyase class-1 family. In terms of assembly, interacts with tim and per; promoted by light conditions. FAD is required as a cofactor.

It is found in the cytoplasm. The protein resides in the perinuclear region. The protein localises to the nucleus. Blue light-dependent regulator that is the input of the circadian feedback loop. Has no photolyase activity for cyclobutane pyrimidine dimers or 6-4 photoproducts. Regulation of expression by light suggests a role in photoreception for locomotor activity rhythms. Functions, together with per, as a transcriptional repressor required for the oscillation of peripheral circadian clocks and for the correct specification of clock cells. Genes directly activated by the transcription factors Clock (Clk) and cycle (cyc) are repressed by cry. The chain is Cryptochrome-1 from Culex quinquefasciatus (Southern house mosquito).